The chain runs to 360 residues: Peptide chain release factor 1 (360 aa).

N5-methylglutamine is present on glutamine 235. Residues 281–310 (AERQRQDAAQAESRRLQVGSGDRSQRIRTY) form a disordered region.

Belongs to the prokaryotic/mitochondrial release factor family. Methylated by PrmC. Methylation increases the termination efficiency of RF1.

It localises to the cytoplasm. In terms of biological role, peptide chain release factor 1 directs the termination of translation in response to the peptide chain termination codons UAG and UAA. In Stenotrophomonas maltophilia (strain K279a), this protein is Peptide chain release factor 1.